A 302-amino-acid chain; its full sequence is Glycine--tRNA ligase alpha subunit (302 aa).

It belongs to the class-II aminoacyl-tRNA synthetase family. Tetramer of two alpha and two beta subunits.

The protein resides in the cytoplasm. The enzyme catalyses tRNA(Gly) + glycine + ATP = glycyl-tRNA(Gly) + AMP + diphosphate. This is Glycine--tRNA ligase alpha subunit from Baumannia cicadellinicola subsp. Homalodisca coagulata.